We begin with the raw amino-acid sequence, 288 residues long: Energy-coupling factor transporter ATP-binding protein EcfA2 (288 aa).

In terms of domain architecture, ABC transporter spans 3–246 (IKLEQLGYCY…PDALVDLGLS (244 aa)). 40 to 47 (GHTGSGKS) lines the ATP pocket.

It belongs to the ABC transporter superfamily. Energy-coupling factor EcfA family. As to quaternary structure, forms a stable energy-coupling factor (ECF) transporter complex composed of 2 membrane-embedded substrate-binding proteins (S component), 2 ATP-binding proteins (A component) and 2 transmembrane proteins (T component).

The protein resides in the cell membrane. Functionally, ATP-binding (A) component of a common energy-coupling factor (ECF) ABC-transporter complex. Unlike classic ABC transporters this ECF transporter provides the energy necessary to transport a number of different substrates. The protein is Energy-coupling factor transporter ATP-binding protein EcfA2 of Listeria welshimeri serovar 6b (strain ATCC 35897 / DSM 20650 / CCUG 15529 / CIP 8149 / NCTC 11857 / SLCC 5334 / V8).